A 102-amino-acid chain; its full sequence is NADH-quinone oxidoreductase subunit K (102 aa).

The next 3 membrane-spanning stretches (helical) occupy residues 6 to 26 (ATHF…GVLT), 31 to 51 (LVIF…LIGF), and 62 to 82 (VFAL…LGIV).

The protein belongs to the complex I subunit 4L family. NDH-1 is composed of 14 different subunits. Subunits NuoA, H, J, K, L, M, N constitute the membrane sector of the complex.

Its subcellular location is the cell membrane. The enzyme catalyses a quinone + NADH + 5 H(+)(in) = a quinol + NAD(+) + 4 H(+)(out). Functionally, NDH-1 shuttles electrons from NADH, via FMN and iron-sulfur (Fe-S) centers, to quinones in the respiratory chain. The immediate electron acceptor for the enzyme in this species is believed to be ubiquinone. Couples the redox reaction to proton translocation (for every two electrons transferred, four hydrogen ions are translocated across the cytoplasmic membrane), and thus conserves the redox energy in a proton gradient. The chain is NADH-quinone oxidoreductase subunit K from Thermomicrobium roseum (strain ATCC 27502 / DSM 5159 / P-2).